Consider the following 515-residue polypeptide: Glucose-6-phosphate 1-dehydrogenase (515 aa).

At alanine 2 the chain carries N-acetylalanine. Residue serine 8 is modified to Phosphoserine. A Phosphothreonine modification is found at threonine 10. Residues 38–45 (GASGDLAK) and arginine 72 contribute to the NADP(+) site. Lysine 89 carries the N6-acetyllysine modification. Positions 147 and 171 each coordinate NADP(+). Residues lysine 171, 201–205 (HYLGK), glutamate 239, and aspartate 258 each bind D-glucose 6-phosphate. Lysine 171 is subject to N6-(2-hydroxyisobutyryl)lysine; alternate. The residue at position 171 (lysine 171) is an N6-acetyllysine; alternate. Histidine 263 (proton acceptor) is an active-site residue. Arginine 357 contributes to the NADP(+) binding site. Lysine 360 and arginine 365 together coordinate D-glucose 6-phosphate. NADP(+) contacts are provided by lysine 366, arginine 370, and arginine 393. Glutamine 395 contributes to the D-glucose 6-phosphate binding site. NADP(+) is bound by residues 401–403 (YTK) and 421–423 (DLT). Residue lysine 403 is modified to N6-acetyllysine. Lysine 432 bears the N6-acetyllysine mark. Arginine 487 serves as a coordination point for NADP(+). N6-acetyllysine is present on lysine 497. NADP(+) contacts are provided by tyrosine 503 and tryptophan 509. Tyrosine 503 carries the post-translational modification Phosphotyrosine.

Belongs to the glucose-6-phosphate dehydrogenase family. Homotetramer; dimer of dimers. Interacts with SIRT2; the interaction is enhanced by H(2)O(2) treatment. Forms a ternary complex with ALDOB and TP53; this interaction is direct. ALDOB stabilizes the complex inhibiting G6PD activity and keeping oxidative pentose phosphate metabolism in check. Post-translationally, acetylated by ELP3 at Lys-403; acetylation inhibits its homodimerization and enzyme activity. Deacetylated by SIRT2 at Lys-403; deacetylation stimulates its enzyme activity.

The protein localises to the cytoplasm. It localises to the cytosol. The protein resides in the membrane. The catalysed reaction is D-glucose 6-phosphate + NADP(+) = 6-phospho-D-glucono-1,5-lactone + NADPH + H(+). It functions in the pathway carbohydrate degradation; pentose phosphate pathway; D-ribulose 5-phosphate from D-glucose 6-phosphate (oxidative stage): step 1/3. In terms of biological role, cytosolic glucose-6-phosphate dehydrogenase that catalyzes the first and rate-limiting step of the oxidative branch within the pentose phosphate pathway/shunt, an alternative route to glycolysis for the dissimilation of carbohydrates and a major source of reducing power and metabolic intermediates for fatty acid and nucleic acid biosynthetic processes. This chain is Glucose-6-phosphate 1-dehydrogenase (G6PD), found in Cricetulus griseus (Chinese hamster).